Here is a 391-residue protein sequence, read N- to C-terminus: Somatostatin receptor type 1 (391 aa).

Residues 1–50 (MFPNGTAPSPTSSPSSSPGGCGEGVCSRGPGSGAADGMEEPGRNSSQNGT) form a disordered region. Residues 1–56 (MFPNGTAPSPTSSPSSSPGGCGEGVCSRGPGSGAADGMEEPGRNSSQNGTLSEGQG) are Extracellular-facing. Residue N4 is glycosylated (N-linked (GlcNAc...) asparagine). The span at 8–18 (PSPTSSPSSSP) shows a compositional bias: low complexity. N-linked (GlcNAc...) asparagine glycosylation is found at N44 and N48. The chain crosses the membrane as a helical span at residues 57 to 84 (SAILISFIYSVVCLVGLCGNSMVIYVIL). Over 85-94 (RYAKMKTATN) the chain is Cytoplasmic. Residues 95–120 (IYILNLAIADELLMLSVPFLVTSTLL) traverse the membrane as a helical segment. At 121-131 (RHWPFGALLCR) the chain is on the extracellular side. C130 and C208 are joined by a disulfide. A helical transmembrane segment spans residues 132–153 (LVLSVDAVNMFTSIYCLTVLSV). Residues 154-175 (DRYVAVVHPIKAARYRRPTVAK) are Cytoplasmic-facing. Residues 176 to 196 (VVNLGVWVLSLLVILPIVVFS) form a helical membrane-spanning segment. At 197–219 (RTAANSDGTVACNMLMPEPAQRW) the chain is on the extracellular side. The helical transmembrane segment at 220-244 (LVGFVLYTFLMGFLLPVGAICLCYV) threads the bilayer. Topologically, residues 245–270 (LIIAKMRMVALKAGWQQRKRSERKIT) are cytoplasmic. A helical membrane pass occupies residues 271-296 (LMVMMVVMVFVICWMPFYVVQLVNVF). The Extracellular portion of the chain corresponds to 297–303 (AEQDDAT). The chain crosses the membrane as a helical span at residues 304 to 327 (VSQLSVILGYANSCANPILYGFLS). The Cytoplasmic segment spans residues 328–391 (DNFKRSFQRI…GTCASRISTL (64 aa)). C339 is lipidated: S-palmitoyl cysteine.

This sequence belongs to the G-protein coupled receptor 1 family. Brain, pituitary, islet, jejunum, stomach, heart, spleen.

It is found in the cell membrane. In terms of biological role, receptor for somatostatin with higher affinity for somatostatin-14 than -28. This receptor is coupled to phosphotyrosine phosphatase and Na(+)/H(+) exchanger via pertussis toxin insensitive G proteins. The chain is Somatostatin receptor type 1 (Sstr1) from Rattus norvegicus (Rat).